The primary structure comprises 487 residues: WRKY transcription factor 1 (487 aa).

The tract at residues 69 to 104 (QSEVDVASPVSEKAPKVSESSGALSLQSGSEGNSPF) is disordered. At Ser-76 the chain carries Phosphoserine. The span at 86–101 (SESSGALSLQSGSEGN) shows a compositional bias: polar residues. A DNA-binding region (WRKY 1) is located at residues 105–169 (IREKVMEDGY…YFGEHDHPKP (65 aa)). Zn(2+)-binding residues include Cys-136, Cys-141, His-164, and His-166. A disordered region spans residues 255-287 (SSRITGDNTHKDYNSPTAKRRKKGGNIELSPVE). The Nuclear localization signal signature appears at 273–277 (KRRKK). The WRKY 2 DNA-binding region spans 301–366 (TLFDIVNDGY…YEGKHDHDMP (66 aa)). The Zn(2+) site is built by Cys-332, Cys-337, His-361, and His-363. Positions 380–487 (EVDDKEGDAN…QKPKTEPAQS (108 aa)) are disordered. Over residues 390–401 (KTPQSSTLQSIT) the composition is skewed to polar residues. Basic and acidic residues-rich tracts occupy residues 429 to 462 (LDEK…DDKT) and 476 to 487 (EEQKPKTEPAQS).

The protein belongs to the WRKY group I family. Expressed to similar levels in root and flower, to a somewhat lower level in stem and to low levels in leaf and siliques.

The protein resides in the nucleus. Transcription factor. Binds to a 5'-CGTTGACCGAG-3' consensus core sequence which contains a W box, a frequently occurring elicitor-responsive cis-acting element. This Arabidopsis thaliana (Mouse-ear cress) protein is WRKY transcription factor 1.